The sequence spans 505 residues: Histidine ammonia-lyase (505 aa).

The 5-imidazolinone (Ala-Gly) cross-link spans 141–143 (ASG). 2,3-didehydroalanine (Ser) is present on serine 142.

Belongs to the PAL/histidase family. In terms of processing, contains an active site 4-methylidene-imidazol-5-one (MIO), which is formed autocatalytically by cyclization and dehydration of residues Ala-Ser-Gly.

The protein localises to the cytoplasm. It catalyses the reaction L-histidine = trans-urocanate + NH4(+). The protein operates within amino-acid degradation; L-histidine degradation into L-glutamate; N-formimidoyl-L-glutamate from L-histidine: step 1/3. This is Histidine ammonia-lyase from Bacillus thuringiensis (strain Al Hakam).